Reading from the N-terminus, the 405-residue chain is Terpene cyclase pbrA (405 aa).

The Mg(2+) site is built by Asp-103, Glu-168, Asn-229, Ser-233, Glu-237, and Asp-241. The D(D/E)XX(D/E) motif motif lies at 103–108 (DDEISS). The short motif at 227 to 237 (LVNDLFSFYKE) is the NSE motif element. The short motif at 316 to 323 (EDLGGSSA) is the WxxxxxRY motif element.

The protein belongs to the trichodiene synthase family. Mg(2+) serves as cofactor.

It functions in the pathway secondary metabolite biosynthesis; terpenoid biosynthesis. Its function is as follows. Terpene cyclase; part of the gene cluster that mediates the biosynthesis of the sesquiterpenoid aspterric acid (AA), an inhibitor of dihydroxy-acid dehydratase (DHAD) effective as an herbicide. PbrA cyclizes farnesyl diphosphate (FPP) to produce (-)-daucane. The cytochrome P450 monooxygenase pbrBB then converts (-)-daucane into the alpha-epoxy carboxylate intermediate which is further converted into the tricyclic aspterric acid by the cytochrome P450 monooxygenase pbrC. The protein is Terpene cyclase pbrA of Penicillium brasilianum.